The sequence spans 70 residues: uncharacterized protein (70 aa).

This is an uncharacterized protein from Schizosaccharomyces pombe (strain 972 / ATCC 24843) (Fission yeast).